The chain runs to 199 residues: Protein MM_0484 (199 aa).

The region spanning 5-196 (TEGRAAVKLA…EKEPDGEVIE (192 aa)) is the AMMECR1 domain.

This Methanosarcina mazei (strain ATCC BAA-159 / DSM 3647 / Goe1 / Go1 / JCM 11833 / OCM 88) (Methanosarcina frisia) protein is Protein MM_0484.